Reading from the N-terminus, the 69-residue chain is DNA-directed RNA polymerase subunit omega (69 aa).

Belongs to the RNA polymerase subunit omega family. In terms of assembly, the RNAP catalytic core consists of 2 alpha, 1 beta, 1 beta' and 1 omega subunit. When a sigma factor is associated with the core the holoenzyme is formed, which can initiate transcription.

It carries out the reaction RNA(n) + a ribonucleoside 5'-triphosphate = RNA(n+1) + diphosphate. Its function is as follows. Promotes RNA polymerase assembly. Latches the N- and C-terminal regions of the beta' subunit thereby facilitating its interaction with the beta and alpha subunits. In Geobacter metallireducens (strain ATCC 53774 / DSM 7210 / GS-15), this protein is DNA-directed RNA polymerase subunit omega.